The following is a 108-amino-acid chain: Putative pterin-4-alpha-carbinolamine dehydratase (108 aa).

The protein belongs to the pterin-4-alpha-carbinolamine dehydratase family.

The catalysed reaction is (4aS,6R)-4a-hydroxy-L-erythro-5,6,7,8-tetrahydrobiopterin = (6R)-L-erythro-6,7-dihydrobiopterin + H2O. This chain is Putative pterin-4-alpha-carbinolamine dehydratase, found in Bordetella avium (strain 197N).